Here is a 240-residue protein sequence, read N- to C-terminus: MIIFPAIDIRNGKCVRLRQGDYNQETIYSNSPVEMAKEWEASGAEYLHTVDLDGAKSGESNNINIIQDVAQALSIPIQVGGGIRSLEVIDKYIQAGVSRVILGTAAITDSVFLQTAVESYAEKIAVSIDARNGFIATDGWTKNSTVEAIPFIKQLESIGVKTIIYTDILKDGMMSGPNFQELDAVQQATTMNIIASGGVTTEKDVQQLKTMNLYGAIIGKALYDGSIKLQDILEGEMDAR.

Asp-8 serves as the catalytic Proton acceptor. Residue Asp-129 is the Proton donor of the active site.

Belongs to the HisA/HisF family.

It localises to the cytoplasm. The catalysed reaction is 1-(5-phospho-beta-D-ribosyl)-5-[(5-phospho-beta-D-ribosylamino)methylideneamino]imidazole-4-carboxamide = 5-[(5-phospho-1-deoxy-D-ribulos-1-ylimino)methylamino]-1-(5-phospho-beta-D-ribosyl)imidazole-4-carboxamide. It participates in amino-acid biosynthesis; L-histidine biosynthesis; L-histidine from 5-phospho-alpha-D-ribose 1-diphosphate: step 4/9. In Oceanobacillus iheyensis (strain DSM 14371 / CIP 107618 / JCM 11309 / KCTC 3954 / HTE831), this protein is 1-(5-phosphoribosyl)-5-[(5-phosphoribosylamino)methylideneamino] imidazole-4-carboxamide isomerase.